The primary structure comprises 132 residues: Small ribosomal subunit protein uS8c (132 aa).

This sequence belongs to the universal ribosomal protein uS8 family. In terms of assembly, part of the 30S ribosomal subunit.

The protein localises to the plastid. It is found in the chloroplast. Functionally, one of the primary rRNA binding proteins, it binds directly to 16S rRNA central domain where it helps coordinate assembly of the platform of the 30S subunit. This chain is Small ribosomal subunit protein uS8c (rps8), found in Nandina domestica (Heavenly bamboo).